A 104-amino-acid polypeptide reads, in one-letter code: DNA-directed RNA polymerase subunit omega (104 aa).

This sequence belongs to the RNA polymerase subunit omega family. In terms of assembly, the RNAP catalytic core consists of 2 alpha, 1 beta, 1 beta' and 1 omega subunit. When a sigma factor is associated with the core the holoenzyme is formed, which can initiate transcription.

The catalysed reaction is RNA(n) + a ribonucleoside 5'-triphosphate = RNA(n+1) + diphosphate. Functionally, promotes RNA polymerase assembly. Latches the N- and C-terminal regions of the beta' subunit thereby facilitating its interaction with the beta and alpha subunits. The protein is DNA-directed RNA polymerase subunit omega (rpoZ) of Streptococcus pyogenes serotype M1.